A 361-amino-acid polypeptide reads, in one-letter code: MPGPQGAGGAPAMNLGKLSPVGWVSSSQGKKRLTADMISPPLGDFRHTMHVGRGGDVFGDTSFLSNHGGGSGSTHRSPRGFLAKKLQLVRRVGAPPRRMASPPAPSPAPPAISPIIKNAISLPQLNQAAYDSLVVGKLSFDRSPASSTDGHSAYGLDSGFCTISRLPRPEKPRDRDRDSSFPAEPELRRSDSLLSFRLDLDLGPSLLTELLGAMSLSEGSAAETPAPAPAASPPASVANPPAPASSPSLRGRCPNGVTTRLGPVAEARASVVGEGPRAPADEGPGKHRGAVSGGSQSRHHYTEVDARAEGLGALSQARASWGSLDEEWGASQAGSRTPVPSTVQANTFEFADAEEDDEVKV.

A disordered region spans residues 1–29; that stretch reads MPGPQGAGGAPAMNLGKLSPVGWVSSSQG. A phosphoserine mark is found at Ser-19 and Ser-27. Thr-34 carries the phosphothreonine modification. The CRIB domain maps to 38 to 52; that stretch reads ISPPLGDFRHTMHVG. Ser-39 is modified (phosphoserine). Arg-53 bears the Omega-N-methylarginine mark. Residues Ser-65, Ser-73, Ser-77, Ser-101, Ser-113, Ser-121, Ser-139, Ser-180, Ser-190, Ser-192, and Ser-195 each carry the phosphoserine modification. Residues 161–186 are disordered; that stretch reads CTISRLPRPEKPRDRDRDSSFPAEPE. Basic and acidic residues predominate over residues 167–186; the sequence is PRPEKPRDRDRDSSFPAEPE. Disordered regions lie at residues 218–300 and 320–361; these read EGSA…SRHH and SWGS…EVKV. 4 repeat units span residues 220-226, 229-235, 236-242, and 243-249. Residues 220 to 249 are 4 X 7 AA tandem repeats of [PT]-[AT]-A-[ENT]-[PT]-[PTS]-[AG]; that stretch reads SAAETPAPAPAASPPASVANPPAPASSPSL. 3 positions are modified to phosphoserine: Ser-270, Ser-320, and Ser-323. The segment covering 332 to 347 has biased composition (polar residues); that stretch reads QAGSRTPVPSTVQANT. Positions 351–361 are enriched in acidic residues; it reads ADAEEDDEVKV.

This sequence belongs to the BORG/CEP family. In terms of assembly, interacts with RHOQ and CDC42, in a GTP-dependent manner.

The protein localises to the endomembrane system. It localises to the cytoplasm. It is found in the cytoskeleton. Probably involved in the organization of the actin cytoskeleton. Induced membrane extensions in fibroblasts. The sequence is that of Cdc42 effector protein 1 from Bos taurus (Bovine).